The following is a 478-amino-acid chain: Calcium/calmodulin-dependent protein kinase type II subunit alpha (478 aa).

Phosphotyrosine is present on Tyr13. A Protein kinase domain is found at 13 to 271; it reads YQLFEELGKG…AAEALKHPWI (259 aa). ATP is bound by residues 19-27 and Lys42; that span reads LGKGAFSVV. The active-site Proton acceptor is Asp135. Ser257 is subject to Phosphoserine. Thr286 carries the post-translational modification Phosphothreonine; by autocatalysis. The calmodulin-binding stretch occupies residues 290-300; the sequence is LKKFNARRKLK. Positions 310 to 320 are interaction with BAALC; the sequence is TRNFSGGKSGG. The interval 314 to 341 is disordered; the sequence is SGGKSGGNKKNDGVKESSESTNTTIEDE. A compositionally biased stretch (basic and acidic residues) spans 322-331; it reads KKNDGVKESS. Ser330, Ser331, and Ser333 each carry phosphoserine. Phosphothreonine occurs at positions 336 and 337. Ser404 carries the post-translational modification Phosphoserine.

This sequence belongs to the protein kinase superfamily. CAMK Ser/Thr protein kinase family. CaMK subfamily. There are 4 genes encoding calcium/calmodulin-dependent protein kinase type II chains: CAMK2A, CAMK2B, CAMK2G and CAMK2D. The corresponding proteins assemble into homo- or heteromultimeric holoenzymes composed of 12 subunits with two hexameric rings stacked one on top of the other. Interacts with BAALC. Interacts with MPDZ. Interacts with SYN1. Interacts with CAMK2N2. Interacts with SYNGAP1. Interacts with SYNPO2. Interacts with SHANK3. Interacts with GRIN2B. Interacts with CACNB2. Interacts with LRRC7. Interacts with GRM5. Interacts with DAGLA (via C-terminal); this interaction is enhanced by autophosphorylation of CAMK2A at Thr-286. Interacts with CAMK2N1; this interaction requires CAMK2A activation by Ca(2+). Mg(2+) serves as cofactor. Post-translationally, autophosphorylation of Thr-286 following activation by Ca(2+)/calmodulin. Phosphorylation of Thr-286 locks the kinase into an activated state. In terms of processing, palmitoylated. Probably palmitoylated by ZDHHC3 and ZDHHC7. As to expression, expressed in brain. Expressed in skeletal muscle.

Its subcellular location is the cytoplasm. The protein localises to the synapse. It localises to the postsynaptic density. The protein resides in the cell projection. It is found in the dendritic spine. Its subcellular location is the dendrite. The enzyme catalyses L-seryl-[protein] + ATP = O-phospho-L-seryl-[protein] + ADP + H(+). The catalysed reaction is L-threonyl-[protein] + ATP = O-phospho-L-threonyl-[protein] + ADP + H(+). Activated by Ca(2+)/calmodulin. Binding of calmodulin results in conformational change that relieves intrasteric autoinhibition and allows autophosphorylation of Thr-286 which turns the kinase in a constitutively active form and confers to the kinase a Ca(2+)-independent activity. Functionally, calcium/calmodulin-dependent protein kinase that functions autonomously after Ca(2+)/calmodulin-binding and autophosphorylation, and is involved in various processes, such as synaptic plasticity, neurotransmitter release and long-term potentiation. Member of the NMDAR signaling complex in excitatory synapses, it regulates NMDAR-dependent potentiation of the AMPAR and therefore excitatory synaptic transmission. Regulates dendritic spine development. Also regulates the migration of developing neurons. Phosphorylates the transcription factor FOXO3 to activate its transcriptional activity. Phosphorylates the transcription factor ETS1 in response to calcium signaling, thereby decreasing ETS1 affinity for DNA. In response to interferon-gamma (IFN-gamma) stimulation, catalyzes phosphorylation of STAT1, stimulating the JAK-STAT signaling pathway. In response to interferon-beta (IFN-beta) stimulation, stimulates the JAK-STAT signaling pathway. Acts as a negative regulator of 2-arachidonoylglycerol (2-AG)-mediated synaptic signaling via modulation of DAGLA activity. In terms of biological role, has no kinase activity. This Mus musculus (Mouse) protein is Calcium/calmodulin-dependent protein kinase type II subunit alpha (Camk2a).